Consider the following 520-residue polypeptide: MVYSTNILLAIVTILTGVFIWSRRTYVYWQRRRVKFVQPTHLLGNLSRVLRLEESFALQLRRFYFDERFRNEPVVGIYLFHQPALLIRDLQLVRTVLVEDFVSFSNRFAKCDGRSDKMGALSLFLAKQPEWREIRTRLAPAFAGAKLKQMFSLMEEIGCDLEWYLKRLTRDLRRGDAERGAIVSIKDVCDLYNTDMIASIAFGLRSYSLRNTQSEIGSHCQDLFRPNVRRIIDLFVIFYLPKLVPLLRPKLFTEPHAEFLRRVIQLVIEERERGGDLRNDLIEMLLTLKKEADLQQDKSHFTHHRDFLAAQAASFEVAGIETCSASMSFALYELAKQPLMQSRLRREIREAFASNPNGRLTYEAVARMEFLDMVVEETLRKYPIVPLLERECTPINKKRFYSLRPHAECYTRRGMPVFISNLAIHHDPKYWPDPDRFDPERFSAANKALQAPMSYMPFGAGPRNCIGMQIGLLQIKLGLVYFLHQHRVEICDRTVERIQFDAKFALLASEQRIYLKVDCL.

Cys-465 contributes to the heme binding site.

This sequence belongs to the cytochrome P450 family. Heme is required as a cofactor.

It is found in the endoplasmic reticulum membrane. Its subcellular location is the microsome membrane. Its function is as follows. May be involved in the metabolism of insect hormones and in the breakdown of synthetic insecticides. The protein is Probable cytochrome P450 6v1 (Cyp6v1) of Drosophila melanogaster (Fruit fly).